Consider the following 330-residue polypeptide: Ribosomal RNA small subunit methyltransferase H (330 aa).

S-adenosyl-L-methionine contacts are provided by residues 35–37, Asp-53, Phe-80, Asp-101, and Gln-108; that span reads GGY.

The protein belongs to the methyltransferase superfamily. RsmH family.

The protein localises to the cytoplasm. It carries out the reaction cytidine(1402) in 16S rRNA + S-adenosyl-L-methionine = N(4)-methylcytidine(1402) in 16S rRNA + S-adenosyl-L-homocysteine + H(+). Functionally, specifically methylates the N4 position of cytidine in position 1402 (C1402) of 16S rRNA. This is Ribosomal RNA small subunit methyltransferase H from Rhodopseudomonas palustris (strain BisB18).